We begin with the raw amino-acid sequence, 185 residues long: Translation initiation factor IF-3 (185 aa).

Belongs to the IF-3 family. Monomer.

It is found in the cytoplasm. Functionally, IF-3 binds to the 30S ribosomal subunit and shifts the equilibrium between 70S ribosomes and their 50S and 30S subunits in favor of the free subunits, thus enhancing the availability of 30S subunits on which protein synthesis initiation begins. The chain is Translation initiation factor IF-3 from Coxiella burnetii (strain RSA 493 / Nine Mile phase I).